The following is a 285-amino-acid chain: HTH-type transcriptional regulator YofA (285 aa).

The region spanning Met-1–Thr-58 is the HTH lysR-type domain. The H-T-H motif DNA-binding region spans Ile-18 to His-37.

It belongs to the LysR transcriptional regulatory family.

It localises to the cytoplasm. Regulates expression of the cell division protein ftsW, and is essential for cell viability during stationary phase. The polypeptide is HTH-type transcriptional regulator YofA (yofA) (Bacillus subtilis (strain 168)).